The sequence spans 745 residues: Putative cryptochrome DASH, mitochondrial (745 aa).

The transit peptide at 1-22 (MAPSKVVIYAMRRELRLSDNPI) directs the protein to the mitochondrion. Residues 23 to 166 (FHHLSNPESK…DFKLWDDEKY (144 aa)) enclose the Photolyase/cryptochrome alpha/beta domain. Disordered regions lie at residues 563–688 (KFNL…GGGG) and 702–745 (GGYR…QTDA). Residues 571–584 (SKVKKRPFFRKRGT) are compositionally biased toward basic residues. A compositionally biased stretch (low complexity) spans 591–603 (GSAESPGSSDSHS). Residues 604 to 616 (GSGGSPDGSGGGN) show a composition bias toward gly residues. The segment covering 632–648 (QQTHQGSGRSQSSSNHG) has biased composition (low complexity). 2 stretches are compositionally biased toward gly residues: residues 672-688 (RGGG…GGGG) and 702-718 (GGYR…GGFR). Polar residues predominate over residues 735–745 (QQVASQFQTDA).

The protein belongs to the DNA photolyase class-1 family. The cofactor is FAD. It depends on (6R)-5,10-methylene-5,6,7,8-tetrahydrofolate as a cofactor.

It is found in the mitochondrion. Its function is as follows. May have a photoreceptor function. The polypeptide is Putative cryptochrome DASH, mitochondrial (cry) (Neurospora crassa (strain ATCC 24698 / 74-OR23-1A / CBS 708.71 / DSM 1257 / FGSC 987)).